Reading from the N-terminus, the 60-residue chain is Small ribosomal subunit protein eS31 (60 aa).

Zn(2+) contacts are provided by Cys-24, Cys-27, Cys-42, and Cys-45. The C4-type zinc-finger motif lies at 24-45 (CPRCGPGVFMADHGNRYACGRC).

The protein belongs to the eukaryotic ribosomal protein eS31 family. In terms of assembly, part of the 30S ribosomal subunit. It depends on Zn(2+) as a cofactor.

This Methanopyrus kandleri (strain AV19 / DSM 6324 / JCM 9639 / NBRC 100938) protein is Small ribosomal subunit protein eS31.